We begin with the raw amino-acid sequence, 309 residues long: MAIELNVGRKVTVTVPGSSANLGPGFDTLGLALSVYDTVEVEIIQSGLEVEVFGEGQGEVPLDGSHLVVKAIRSGLKTADAEVPGLRVVCHNNIPQSRGLGSSAAAAVAGVAAANGLAGFPLTQEQVVQLASAFEGHPDNAAASVLGGAVVSWTNLPVDGKSQPEYSAVGLDVHEGIRATALVPDFHASTEAVRRVLPSDVTHIDARFNVSRVAVMIVALQQRPDLLWEGTRDRLHQPYRADVLPVTAEWVNRLRNRGYAAYLSGAGPTVMVLSTEPVSDKILDDAREAGLRVIELEVADPVRIEVVHE.

95–105 is a binding site for ATP; that stretch reads PQSRGLGSSAA.

Belongs to the GHMP kinase family. Homoserine kinase subfamily.

The protein resides in the cytoplasm. The enzyme catalyses L-homoserine + ATP = O-phospho-L-homoserine + ADP + H(+). Its pathway is amino-acid biosynthesis; L-threonine biosynthesis; L-threonine from L-aspartate: step 4/5. Functionally, catalyzes the ATP-dependent phosphorylation of L-homoserine to L-homoserine phosphate. The sequence is that of Homoserine kinase from Corynebacterium efficiens (strain DSM 44549 / YS-314 / AJ 12310 / JCM 11189 / NBRC 100395).